The chain runs to 574 residues: Probable inactive serine/threonine-protein kinase slob2 (574 aa).

Residues 6–26 (YIIIAAVGGFAILTFIIIVVL) form a helical membrane-spanning segment. Residues 166 to 346 (YADRGSLRDF…PLHRLTYTSR (181 aa)) form the Protein kinase domain. N-linked (GlcNAc...) asparagine glycosylation occurs at N358. The interval 366–386 (SKPNSKDLSQPKLKDLKKQKK) is disordered. N-linked (GlcNAc...) asparagine glycans are attached at residues N440, N449, N453, N456, N464, N470, N477, and N483. Over residues 450–493 (TTTNTTNTSTSSSLNSSFNSNVSTSYSNATTTTNTTSASSVSPP) the composition is skewed to low complexity. The interval 450-574 (TTTNTTNTST…DKSGPLLKKS (125 aa)) is disordered. The span at 494–539 (ISSPPPPPPPPPPSKSSGPPPPPPPPPKSSGPPPPPPPKSSPPPPA) shows a compositional bias: pro residues. The segment covering 546-556 (LLSSIESFSSS) has biased composition (low complexity).

The protein belongs to the protein kinase superfamily. Ser/Thr protein kinase family.

The protein resides in the membrane. The polypeptide is Probable inactive serine/threonine-protein kinase slob2 (slob2) (Dictyostelium discoideum (Social amoeba)).